We begin with the raw amino-acid sequence, 212 residues long: ATP phosphoribosyltransferase (212 aa).

The protein belongs to the ATP phosphoribosyltransferase family. Short subfamily. Heteromultimer composed of HisG and HisZ subunits.

The protein localises to the cytoplasm. The catalysed reaction is 1-(5-phospho-beta-D-ribosyl)-ATP + diphosphate = 5-phospho-alpha-D-ribose 1-diphosphate + ATP. It participates in amino-acid biosynthesis; L-histidine biosynthesis; L-histidine from 5-phospho-alpha-D-ribose 1-diphosphate: step 1/9. In terms of biological role, catalyzes the condensation of ATP and 5-phosphoribose 1-diphosphate to form N'-(5'-phosphoribosyl)-ATP (PR-ATP). Has a crucial role in the pathway because the rate of histidine biosynthesis seems to be controlled primarily by regulation of HisG enzymatic activity. The polypeptide is ATP phosphoribosyltransferase (Clostridium botulinum (strain Okra / Type B1)).